Reading from the N-terminus, the 242-residue chain is MNHKDPLVSWNVFGLDVVFNLSSIMMLIITAVIVFVIAIICTRNLKKRPTGKQNFIEWVFDFVRGIIESNMAWSKGGQFHFLAVTLIFFIFVSNMLGLPFQLISGHTLWWKSPTADATVTLTLSTLIILLTHFYGVRMKGTKGYFQNYTKPIFLLPINIFEEFTSTLTLGLRLYGNIFAGELLLGLLAGLVTGDSTRAWGWIIGLPGLVVWQGFSIFIGTIQAYIFVMLSMVYMSHKVQDSH.

The next 5 membrane-spanning stretches (helical) occupy residues 21–41 (LSSIMMLIITAVIVFVIAIIC), 79–99 (FHFLAVTLIFFIFVSNMLGLP), 116–136 (DATVTLTLSTLIILLTHFYGV), 173–193 (LYGNIFAGELLLGLLAGLVTG), and 198–218 (AWGWIIGLPGLVVWQGFSIFI).

It belongs to the ATPase A chain family. In terms of assembly, F-type ATPases have 2 components, CF(1) - the catalytic core - and CF(0) - the membrane proton channel. CF(1) has five subunits: alpha(3), beta(3), gamma(1), delta(1), epsilon(1). CF(0) has three main subunits: a(1), b(2) and c(9-12). The alpha and beta chains form an alternating ring which encloses part of the gamma chain. CF(1) is attached to CF(0) by a central stalk formed by the gamma and epsilon chains, while a peripheral stalk is formed by the delta and b chains.

The protein resides in the cell membrane. Its function is as follows. Key component of the proton channel; it plays a direct role in the translocation of protons across the membrane. The protein is ATP synthase subunit a of Staphylococcus saprophyticus subsp. saprophyticus (strain ATCC 15305 / DSM 20229 / NCIMB 8711 / NCTC 7292 / S-41).